The sequence spans 167 residues: Large ribosomal subunit protein uL22 (167 aa).

The segment at 120–167 is disordered; it reads GSTATTVEDEAPKAKGAKGAKAKKAPAKKAAAKKAPAKKFAGKKTAKR. The segment covering 134–167 has biased composition (basic residues); the sequence is KGAKGAKAKKAPAKKAAAKKAPAKKFAGKKTAKR.

This sequence belongs to the universal ribosomal protein uL22 family. Part of the 50S ribosomal subunit.

This protein binds specifically to 23S rRNA; its binding is stimulated by other ribosomal proteins, e.g. L4, L17, and L20. It is important during the early stages of 50S assembly. It makes multiple contacts with different domains of the 23S rRNA in the assembled 50S subunit and ribosome. Its function is as follows. The globular domain of the protein is located near the polypeptide exit tunnel on the outside of the subunit, while an extended beta-hairpin is found that lines the wall of the exit tunnel in the center of the 70S ribosome. The protein is Large ribosomal subunit protein uL22 of Koribacter versatilis (strain Ellin345).